The following is a 366-amino-acid chain: Isocitrate dehydrogenase [NAD] subunit alpha, mitochondrial (366 aa).

The N-terminal 27 residues, 1-27 (MAGSAWVSKVSRLLGAFHNTKQVTRGF), are a transit peptide targeting the mitochondrion. At Lys77 the chain carries N6-succinyllysine. Position 101 is a phosphothreonine (Thr101). The substrate site is built by Arg115, Arg125, and Arg146. Lys223 is modified (N6-acetyllysine). Mg(2+) is bound by residues Asp233, Asp257, and Asp261. At Lys343 the chain carries N6-acetyllysine; alternate. Residue Lys343 is modified to N6-succinyllysine; alternate. Lys350 is modified (N6-succinyllysine).

It belongs to the isocitrate and isopropylmalate dehydrogenases family. In terms of assembly, heterooligomer of subunits alpha (IDH3A), beta (IDH3B), and gamma (IDH3G) in the apparent ratio of 2:1:1. The heterodimer containing one IDH3A and one IDH3B subunit and the heterodimer containing one IDH3A and one IDH3G subunit assemble into a heterotetramer (which contains two subunits of IDH3A, one of IDH3B and one of IDH3G) and further into the heterooctamer. Mg(2+) is required as a cofactor. Requires Mn(2+) as cofactor. In terms of tissue distribution, expressed in brown adipose tissue (BAT).

It is found in the mitochondrion. The catalysed reaction is D-threo-isocitrate + NAD(+) = 2-oxoglutarate + CO2 + NADH. With respect to regulation, the heterotetramer and the heterodimer composed of IDH3A and IDH3G subunits can be allosterically activated by citrate (CIT) or/and ADP, and the two activators can act independently or synergistically. The heterodimer composed of IDH3A and IDH3B subunits cannot be allosterically regulated and the allosteric regulation of the heterotetramer is through the IDH3G subunit and not the IDH3B subunit. The IDH3G subunit contains the allosteric site which consists of a CIT-binding site and an ADP-binding site, and the binding of CIT and ADP causes conformational changes at the allosteric site which are transmitted to the active site in the catalytic subunit (IDH3A) through a cascade of conformational changes at the heterodimer interface, leading to stabilization of the isocitrate-binding at the active site and thus activation of the enzyme. ATP can activate the heterotetramer and the heterodimer composed of IDH3A and IDH3G subunits at low concentrations but inhibits their activities at high concentrations, whereas ATP exhibits only inhibitory effect on the heterodimer composed of IDH3A and IDH3B subunits. Its function is as follows. Catalytic subunit of the enzyme which catalyzes the decarboxylation of isocitrate (ICT) into alpha-ketoglutarate. The heterodimer composed of the alpha (IDH3A) and beta (IDH3B) subunits and the heterodimer composed of the alpha (IDH3A) and gamma (IDH3G) subunits, have considerable basal activity but the full activity of the heterotetramer (containing two subunits of IDH3A, one of IDH3B and one of IDH3G) requires the assembly and cooperative function of both heterodimers. The protein is Isocitrate dehydrogenase [NAD] subunit alpha, mitochondrial of Rattus norvegicus (Rat).